The sequence spans 138 residues: Ribosome-binding factor A (138 aa).

A disordered region spans residues 112-138 (EARTQGQAPAADVEPAPGAAPDDEAEE). Residues 119 to 131 (APAADVEPAPGAA) are compositionally biased toward low complexity.

The protein belongs to the RbfA family. As to quaternary structure, monomer. Binds 30S ribosomal subunits, but not 50S ribosomal subunits or 70S ribosomes.

The protein localises to the cytoplasm. Its function is as follows. One of several proteins that assist in the late maturation steps of the functional core of the 30S ribosomal subunit. Associates with free 30S ribosomal subunits (but not with 30S subunits that are part of 70S ribosomes or polysomes). Required for efficient processing of 16S rRNA. May interact with the 5'-terminal helix region of 16S rRNA. The sequence is that of Ribosome-binding factor A from Anaeromyxobacter sp. (strain K).